Here is a 222-residue protein sequence, read N- to C-terminus: Ras-related protein Rab11D (222 aa).

GTP is bound at residue 22–29 (GDSAVGKS). Residues 44-52 (SKATIGVEF) carry the Effector region motif. Residues 70 to 74 (DTAGQ) and 128 to 131 (NKTD) each bind GTP. 2 S-geranylgeranyl cysteine lipidation sites follow: C219 and C220.

The protein belongs to the small GTPase superfamily. Rab family.

It localises to the cell membrane. This chain is Ras-related protein Rab11D (RAB11D), found in Nicotiana tabacum (Common tobacco).